A 206-amino-acid chain; its full sequence is Large ribosomal subunit protein uL4 (206 aa).

The protein belongs to the universal ribosomal protein uL4 family. Part of the 50S ribosomal subunit.

One of the primary rRNA binding proteins, this protein initially binds near the 5'-end of the 23S rRNA. It is important during the early stages of 50S assembly. It makes multiple contacts with different domains of the 23S rRNA in the assembled 50S subunit and ribosome. Functionally, forms part of the polypeptide exit tunnel. This is Large ribosomal subunit protein uL4 from Rhodopseudomonas palustris (strain BisA53).